Reading from the N-terminus, the 34-residue chain is U10-ctenitoxin-Pr1a (34 aa).

Cystine bridges form between Cys2-Cys15, Cys9-Cys20, Cys14-Cys31, and Cys22-Cys29.

As to expression, expressed by the venom gland.

It localises to the secreted. In terms of biological role, non-toxic to mice and insects. In Phoneutria reidyi (Brazilian Amazonian armed spider), this protein is U10-ctenitoxin-Pr1a.